The following is a 95-amino-acid chain: Small ribosomal subunit protein bS6 (95 aa).

This sequence belongs to the bacterial ribosomal protein bS6 family.

Binds together with bS18 to 16S ribosomal RNA. In Clostridium perfringens (strain ATCC 13124 / DSM 756 / JCM 1290 / NCIMB 6125 / NCTC 8237 / Type A), this protein is Small ribosomal subunit protein bS6.